The sequence spans 547 residues: uncharacterized protein (547 aa).

12 helical membrane-spanning segments follow: residues Pro-33–Ile-53, Pro-107–Phe-127, Thr-145–Ala-165, Val-203–Ala-223, Phe-231–Val-251, Val-263–Leu-283, Leu-298–Phe-318, Thr-351–Leu-371, Thr-397–Gly-417, Leu-432–Gly-452, Ile-470–Ile-490, and Val-499–Gly-519.

The protein resides in the cell membrane. This is an uncharacterized protein from Mycoplasma genitalium (strain ATCC 33530 / DSM 19775 / NCTC 10195 / G37) (Mycoplasmoides genitalium).